Reading from the N-terminus, the 95-residue chain is Aspartyl/glutamyl-tRNA(Asn/Gln) amidotransferase subunit C (95 aa).

It belongs to the GatC family. In terms of assembly, heterotrimer of A, B and C subunits.

It catalyses the reaction L-glutamyl-tRNA(Gln) + L-glutamine + ATP + H2O = L-glutaminyl-tRNA(Gln) + L-glutamate + ADP + phosphate + H(+). The catalysed reaction is L-aspartyl-tRNA(Asn) + L-glutamine + ATP + H2O = L-asparaginyl-tRNA(Asn) + L-glutamate + ADP + phosphate + 2 H(+). Allows the formation of correctly charged Asn-tRNA(Asn) or Gln-tRNA(Gln) through the transamidation of misacylated Asp-tRNA(Asn) or Glu-tRNA(Gln) in organisms which lack either or both of asparaginyl-tRNA or glutaminyl-tRNA synthetases. The reaction takes place in the presence of glutamine and ATP through an activated phospho-Asp-tRNA(Asn) or phospho-Glu-tRNA(Gln). The protein is Aspartyl/glutamyl-tRNA(Asn/Gln) amidotransferase subunit C of Syntrophus aciditrophicus (strain SB).